The following is an 89-amino-acid chain: Small ribosomal subunit protein uS15 (89 aa).

Belongs to the universal ribosomal protein uS15 family. Part of the 30S ribosomal subunit. Forms a bridge to the 50S subunit in the 70S ribosome, contacting the 23S rRNA.

One of the primary rRNA binding proteins, it binds directly to 16S rRNA where it helps nucleate assembly of the platform of the 30S subunit by binding and bridging several RNA helices of the 16S rRNA. In terms of biological role, forms an intersubunit bridge (bridge B4) with the 23S rRNA of the 50S subunit in the ribosome. The protein is Small ribosomal subunit protein uS15 of Pseudomonas fluorescens (strain Pf0-1).